The following is a 407-amino-acid chain: Protein NIS1 (407 aa).

Residues 40–61 (TSNSNSNSNSNSNTNSNTNSNS) are compositionally biased toward low complexity. Disordered regions lie at residues 40 to 64 (TSNSNSNSNSNSNTNSNTNSNSDTK) and 251 to 315 (RSIR…KLNT). 2 positions are modified to phosphoserine: Ser260 and Ser264. A compositionally biased stretch (low complexity) spans 266–276 (PTTTPATATKT). Polar residues predominate over residues 277-302 (IKQNSTTPTTRSVYNKNVGRSNTSPS). Residues Ser300 and Ser302 each carry the phosphoserine modification. Basic residues predominate over residues 306-315 (HPKRRGKLNT). The short motif at 391 to 398 (IIIPDSQD) is the SUMO-binding element.

In terms of assembly, interacts with CBF2, GIS1, NAP1, PRM8, REI1, SHS1 and SMT3.

It is found in the bud neck. The protein localises to the cytoplasm. Its subcellular location is the cell cortex. In terms of biological role, may be involved in a mitotic signaling network. Binds sumoylated proteins and may stabilize SUMO chains. This is Protein NIS1 (NIS1) from Saccharomyces cerevisiae (strain YJM789) (Baker's yeast).